Reading from the N-terminus, the 27-residue chain is RDWERREFERRQNELRREQEQRREELL.

In terms of biological role, has weak antifungal activity toward C.comatus and P.piricola but not toward M.arachidicola. Inhibits cell-free translation in rabbit reticulocyte lysate system. The sequence is that of Alpha-benincasin from Benincasa hispida (Wax gourd).